The chain runs to 359 residues: MLTAERIKFTQKRGFRRVLNQRVDAYFAEHGLTQRDNPSMYLKTLIIVLWLFSAWAFVLFAPVIFPVRLLGCMVLAIALAAFSFNVGHDANHNAYSSNPHINRVLGMTYDFVGLSSFLWRYRHNYLHHTYTNILGHDVEIHGDGAVRMSPEQEHVGIYRFQQFYIWGLYLFIPFYWFLYDVYLVLNKGKYHDHKIPPFQPLELASLLGIKLLWLGYVFGLPLALGFSIPEVLIGASVTYMTYGIVVCTIFMLAHVLESTEFLTPDGESGAIDDEWAICQIRTTANFATNNPFWNWFCGGLNHQVTHHLFPNICHIHYPQLENIIKDVCQEFGVEYKVYPTFKAAIASNYRWLEAMGKAS.

The next 2 helical transmembrane spans lie at 45-65 (LIIV…PVIF) and 69-89 (LLGC…VGHD). The Histidine box-1 motif lies at 88 to 92 (HDANH). The short motif at 123–128 (HNYLHH) is the Histidine box-2 element. 3 helical membrane passes run 165–185 (IWGL…YLVL), 206–226 (LLGI…ALGF), and 231–251 (VLIG…TIFM). Positions 306–310 (HHLFP) match the Histidine box-3 motif.

This sequence belongs to the fatty acid desaturase type 2 family. Fe(2+) is required as a cofactor.

It is found in the membrane. It catalyses the reaction a 1-[(9Z,12Z)-octadecdienoyl]-2-acyl-glycerolipid + 2 reduced [2Fe-2S]-[ferredoxin] + O2 + 2 H(+) = a 1-[(6Z,9Z,12Z)-octadectrienoyl]-2-acyl-glycerolipid + 2 oxidized [2Fe-2S]-[ferredoxin] + 2 H2O. Its pathway is lipid metabolism; polyunsaturated fatty acid biosynthesis. Desaturase involved in fatty acid biosynthesis. Introduces a double bond at carbon 6 of linoleoyl group (18:2) attached to the sn-1 position of the glycerol moiety of membrane glycerolipids, leading to the formation of gamma-linolenic acid (GLA). This chain is sn-1 linoleoyl-lipid 6-desaturase, found in Synechocystis sp. (strain ATCC 27184 / PCC 6803 / Kazusa).